A 254-amino-acid chain; its full sequence is Alcohol dehydrogenase (254 aa).

10-33 lines the NAD(+) pocket; it reads FVAGLGGIGLDTSREIVKSGPKNL. Ser-138 contacts substrate. Tyr-151 (proton acceptor) is an active-site residue.

It belongs to the short-chain dehydrogenases/reductases (SDR) family. As to quaternary structure, homodimer.

It carries out the reaction a primary alcohol + NAD(+) = an aldehyde + NADH + H(+). The enzyme catalyses a secondary alcohol + NAD(+) = a ketone + NADH + H(+). In Drosophila differens (Fruit fly), this protein is Alcohol dehydrogenase (Adh).